A 160-amino-acid polypeptide reads, in one-letter code: Eukaryotic translation initiation factor 5A-4 (160 aa).

Over residues 1-12 (MSDEEHHFESKA) the composition is skewed to basic and acidic residues. A disordered region spans residues 1 to 21 (MSDEEHHFESKADAGASKTYP). A Hypusine modification is found at K52.

The protein belongs to the eIF-5A family. Lys-52 undergoes hypusination, a unique post-translational modification that consists in the addition of a butylamino group from spermidine to lysine side chain, leading to the formation of the unusual amino acid hypusine. eIF-5As are the only known proteins to undergo this modification, which is essential for their function.

In terms of biological role, translation factor that promotes translation elongation and termination, particularly upon ribosome stalling at specific amino acid sequence contexts. Binds between the exit (E) and peptidyl (P) site of the ribosome and promotes rescue of stalled ribosome: specifically required for efficient translation of polyproline-containing peptides as well as other motifs that stall the ribosome. Acts as a ribosome quality control (RQC) cofactor by joining the RQC complex to facilitate peptidyl transfer during CAT tailing step. This chain is Eukaryotic translation initiation factor 5A-4, found in Solanum lycopersicum (Tomato).